Here is a 469-residue protein sequence, read N- to C-terminus: Glutamate--tRNA ligase (469 aa).

Residues proline 9 to glycine 19 carry the 'HIGH' region motif. The 'KMSKS' region signature appears at lysine 236–arginine 240. Position 239 (lysine 239) interacts with ATP.

This sequence belongs to the class-I aminoacyl-tRNA synthetase family. Glutamate--tRNA ligase type 1 subfamily. As to quaternary structure, monomer.

It is found in the cytoplasm. It carries out the reaction tRNA(Glu) + L-glutamate + ATP = L-glutamyl-tRNA(Glu) + AMP + diphosphate. Catalyzes the attachment of glutamate to tRNA(Glu) in a two-step reaction: glutamate is first activated by ATP to form Glu-AMP and then transferred to the acceptor end of tRNA(Glu). This is Glutamate--tRNA ligase from Shewanella frigidimarina (strain NCIMB 400).